Consider the following 87-residue polypeptide: Putative sodium channel toxin Ts38 (87 aa).

The first 22 residues, 1–22 (MKHLKFYSILFLFSIFVYKVNA), serve as a signal peptide directing secretion. 3 disulfide bridges follow: cysteine 42–cysteine 65, cysteine 51–cysteine 72, and cysteine 55–cysteine 74.

It belongs to the long (3 C-C) scorpion toxin superfamily. Sodium channel inhibitor family. Expressed by the venom gland.

Its subcellular location is the secreted. Its function is as follows. Putative sodium channel toxin. This is Putative sodium channel toxin Ts38 from Tityus serrulatus (Brazilian scorpion).